We begin with the raw amino-acid sequence, 135 residues long: uncharacterized protein (135 aa).

A helical transmembrane segment spans residues 4 to 24 (LGVFLILASIVCGVVAICGCT).

It is found in the membrane. This is an uncharacterized protein from Methanocaldococcus jannaschii (strain ATCC 43067 / DSM 2661 / JAL-1 / JCM 10045 / NBRC 100440) (Methanococcus jannaschii).